A 292-amino-acid polypeptide reads, in one-letter code: NAD kinase (292 aa).

The active-site Proton acceptor is D73. Residues 73 to 74 (DG), 147 to 148 (NE), H158, R175, D177, 188 to 193 (TAYSLS), and Q247 each bind NAD(+).

It belongs to the NAD kinase family. It depends on a divalent metal cation as a cofactor.

The protein resides in the cytoplasm. It catalyses the reaction NAD(+) + ATP = ADP + NADP(+) + H(+). Functionally, involved in the regulation of the intracellular balance of NAD and NADP, and is a key enzyme in the biosynthesis of NADP. Catalyzes specifically the phosphorylation on 2'-hydroxyl of the adenosine moiety of NAD to yield NADP. The protein is NAD kinase of Edwardsiella ictaluri (strain 93-146).